Consider the following 368-residue polypeptide: MISNINLEDKFFSFFFTLGFSKEFFNFLWIIFSILILMLGVTIGVLVLVWLERKISAAIQQRIGPEYAGPLGIIQALADGIKLFLKEDIVPAQGDVWLFNIGPILVLIPVFLSYLVIPFEYNVILANFSIGVFFWIAVSSVVPLGLLMAGYGSNNKYSFLGGLRAAAQSISYEIPLALSVLSIALLSNSLSTVDIVEAQSKYGFLSWNLWRQPIGFIVFFIASLAECERLPFDLPEAEEELVAGYQTEYSGMKFAFFYLASYLNLLVSSLFVTILYLGGWHFSIPFFSLFKNFEWNLMSNGISEVISIIIGIVITLVKSYLFLFISIMTRWTLPRIRIDQLLNLGWKFLLPIALGNLLLTTSFQLFLL.

9 helical membrane passes run 27-47, 97-117, 130-150, 166-186, 204-224, 249-269, 270-290, 305-325, and 348-368; these read FLWIIFSILILMLGVTIGVLV, WLFNIGPILVLIPVFLSYLVI, IGVFFWIAVSSVVPLGLLMAG, AAQSISYEIPLALSVLSIALL, FLSWNLWRQPIGFIVFFIASL, YSGMKFAFFYLASYLNLLVSS, LFVTILYLGGWHFSIPFFSLF, VISIIIGIVITLVKSYLFLFI, and FLLPIALGNLLLTTSFQLFLL.

Belongs to the complex I subunit 1 family. As to quaternary structure, NDH is composed of at least 16 different subunits, 5 of which are encoded in the nucleus.

Its subcellular location is the plastid. The protein resides in the chloroplast thylakoid membrane. It catalyses the reaction a plastoquinone + NADH + (n+1) H(+)(in) = a plastoquinol + NAD(+) + n H(+)(out). The catalysed reaction is a plastoquinone + NADPH + (n+1) H(+)(in) = a plastoquinol + NADP(+) + n H(+)(out). Functionally, NDH shuttles electrons from NAD(P)H:plastoquinone, via FMN and iron-sulfur (Fe-S) centers, to quinones in the photosynthetic chain and possibly in a chloroplast respiratory chain. The immediate electron acceptor for the enzyme in this species is believed to be plastoquinone. Couples the redox reaction to proton translocation, and thus conserves the redox energy in a proton gradient. The sequence is that of NAD(P)H-quinone oxidoreductase subunit 1, chloroplastic from Marchantia polymorpha (Common liverwort).